Here is a 121-residue protein sequence, read N- to C-terminus: uncharacterized protein (121 aa).

Disordered regions lie at residues 38-76 and 91-121; these read NQMA…KYQQ and SVLR…KQEN. Residues 43–63 are compositionally biased toward basic residues; the sequence is KRNKQSKKPKQTSKGVKKSSK. A compositionally biased stretch (low complexity) spans 64 to 76; that stretch reads QNKNSSKNNKYQQ.

This is an uncharacterized protein from Schizosaccharomyces pombe (strain 972 / ATCC 24843) (Fission yeast).